The sequence spans 31 residues: Potassium channel toxin alpha-KTx 5.1 (31 aa).

3 disulfide bridges follow: Cys-3/Cys-21, Cys-8/Cys-26, and Cys-12/Cys-28. A [R/K]XCQ motif region spans residues Arg-6–Gln-9. At His-31 the chain carries Histidine amide.

This sequence belongs to the short scorpion toxin superfamily. Potassium channel inhibitor family. Alpha-KTx 05 subfamily. Two disulfide bonds are the minimal requirement needed to produce a nativelike and bio-active conformation in this toxin. The third disulfide provides an additional contribution to structure stabilization and can modulate biological potency depending on its position and the structural regions involved in biological activity. In terms of tissue distribution, expressed by the venom gland.

It localises to the secreted. Its function is as follows. Blocker for the small conductance calcium-activated potassium channels. Shows the best affinity for KCa2.2/KCNN2 (Kd=0.2 nM), followed by KCa2.3/KCNN3 (Kd=1.1 nM) and KCa2.1/KCNN1 (Kd=325 nM). In Leiurus hebraeus (Hebrew deathstalker scorpion), this protein is Potassium channel toxin alpha-KTx 5.1.